The following is a 184-amino-acid chain: NADH-quinone oxidoreductase subunit B (184 aa).

The [4Fe-4S] cluster site is built by Cys37, Cys38, Cys103, and Cys132.

It belongs to the complex I 20 kDa subunit family. NDH-1 is composed of 14 different subunits. Subunits NuoB, C, D, E, F, and G constitute the peripheral sector of the complex. [4Fe-4S] cluster serves as cofactor.

It is found in the cell membrane. The enzyme catalyses a quinone + NADH + 5 H(+)(in) = a quinol + NAD(+) + 4 H(+)(out). Its function is as follows. NDH-1 shuttles electrons from NADH, via FMN and iron-sulfur (Fe-S) centers, to quinones in the respiratory chain. The immediate electron acceptor for the enzyme in this species is believed to be a menaquinone. Couples the redox reaction to proton translocation (for every two electrons transferred, four hydrogen ions are translocated across the cytoplasmic membrane), and thus conserves the redox energy in a proton gradient. The chain is NADH-quinone oxidoreductase subunit B from Mycobacteroides abscessus (strain ATCC 19977 / DSM 44196 / CCUG 20993 / CIP 104536 / JCM 13569 / NCTC 13031 / TMC 1543 / L948) (Mycobacterium abscessus).